Reading from the N-terminus, the 869-residue chain is Bifunctional uridylyltransferase/uridylyl-removing enzyme (869 aa).

The uridylyltransferase stretch occupies residues 1 to 332; sequence MTATPADRPD…QFDGEAVPVQ (332 aa). A uridylyl-removing region spans residues 333–691; sequence LDAGFSLRRG…RRAVPDNDAL (359 aa). Residues 450-572 form the HD domain; it reads VDQHTLMVLR…VGTRERLDYL (123 aa). ACT domains are found at residues 692-771 and 798-869; these read EVFV…PSRR and RISL…LDPT.

The protein belongs to the GlnD family. Mg(2+) serves as cofactor.

The catalysed reaction is [protein-PII]-L-tyrosine + UTP = [protein-PII]-uridylyl-L-tyrosine + diphosphate. It carries out the reaction [protein-PII]-uridylyl-L-tyrosine + H2O = [protein-PII]-L-tyrosine + UMP + H(+). Uridylyltransferase (UTase) activity is inhibited by glutamine, while glutamine activates uridylyl-removing (UR) activity. Its function is as follows. Modifies, by uridylylation and deuridylylation, the PII regulatory proteins (GlnB and homologs), in response to the nitrogen status of the cell that GlnD senses through the glutamine level. Under low glutamine levels, catalyzes the conversion of the PII proteins and UTP to PII-UMP and PPi, while under higher glutamine levels, GlnD hydrolyzes PII-UMP to PII and UMP (deuridylylation). Thus, controls uridylylation state and activity of the PII proteins, and plays an important role in the regulation of nitrogen assimilation and metabolism. The sequence is that of Bifunctional uridylyltransferase/uridylyl-removing enzyme from Xanthomonas campestris pv. campestris (strain B100).